Reading from the N-terminus, the 112-residue chain is K(+)/H(+) antiporter modulator KhtS (112 aa).

The tract at residues 42-64 is disordered; sequence YVPMSSYPQETQSAKTPSPGSMH. Over residues 47–60 the composition is skewed to polar residues; the sequence is SYPQETQSAKTPSP.

Its subcellular location is the cell membrane. Modulates the activity of the potassium/proton antiporter KhtU. Involved in protection of the cell from methylglyoxal, a toxic by-product of glycolysis. This is K(+)/H(+) antiporter modulator KhtS from Bacillus subtilis (strain 168).